Consider the following 210-residue polypeptide: 2-Cys peroxiredoxin BAS1, chloroplastic (210 aa).

The N-terminal 10 residues, 1 to 10 (DARARSFVAR), are a transit peptide targeting the chloroplast. A Thioredoxin domain is found at 18 to 177 (PLVGNKAPDF…TLRTLQALQY (160 aa)). Cys64 acts as the Cysteine sulfenic acid (-SOH) intermediate in catalysis.

The protein belongs to the peroxiredoxin family. AhpC/Prx1 subfamily. As to quaternary structure, homodimer; disulfide-linked, upon oxidation. In terms of tissue distribution, expressed in leaf blade, sheath, basiplast, stem and green spike. Maximal expression in young developing shoots segments where cell division and elongation take place. Not expressed in roots.

The protein localises to the plastid. It is found in the chloroplast. The catalysed reaction is a hydroperoxide + [thioredoxin]-dithiol = an alcohol + [thioredoxin]-disulfide + H2O. Its function is as follows. Thiol-specific peroxidase that catalyzes the reduction of hydrogen peroxide and organic hydroperoxides to water and alcohols, respectively. Plays a role in cell protection against oxidative stress by detoxifying peroxides. May be an antioxidant enzyme particularly in the developing shoot and photosynthesizing leaf. The polypeptide is 2-Cys peroxiredoxin BAS1, chloroplastic (BAS1) (Hordeum vulgare (Barley)).